A 460-amino-acid polypeptide reads, in one-letter code: C4-dicarboxylate transport protein (460 aa).

Transmembrane regions (helical) follow at residues 20 to 40 (SLYFQVIVAIVIGILIGHFYP), 56 to 76 (LIKMVIAPIIFCTVVSGIAGM), 88 to 108 (YALLYFEIVSTIALLIGLIVV), 153 to 173 (IVGAFANGDILQVLMFSVIFG), 200 to 220 (IINMIMKLAPIGAFGAMAFTI), 234 to 254 (LMICFYITCALFVVLVLGAIC), 301 to 321 (VVGLVIPTGYSFNLDGTSIYL), 342 to 362 (ITLLLVLLLSSKGAAGVTGSG), and 364 to 384 (IVLAATLSAVGHLPVAGLALI). Residues 438-460 (PEDDLGVAEGPTPANAVNTTKTV) are disordered.

It belongs to the dicarboxylate/amino acid:cation symporter (DAACS) (TC 2.A.23) family.

Its subcellular location is the cell inner membrane. In terms of biological role, responsible for the transport of dicarboxylates such as succinate, fumarate, and malate from the periplasm across the membrane. The chain is C4-dicarboxylate transport protein from Pseudomonas savastanoi pv. phaseolicola (strain 1448A / Race 6) (Pseudomonas syringae pv. phaseolicola (strain 1448A / Race 6)).